The following is a 524-amino-acid chain: Lysine--tRNA ligase (524 aa).

Positions 431 and 438 each coordinate Mg(2+).

Belongs to the class-II aminoacyl-tRNA synthetase family. As to quaternary structure, homodimer. Mg(2+) is required as a cofactor.

The protein localises to the cytoplasm. It catalyses the reaction tRNA(Lys) + L-lysine + ATP = L-lysyl-tRNA(Lys) + AMP + diphosphate. The sequence is that of Lysine--tRNA ligase (lysS) from Chlamydia muridarum (strain MoPn / Nigg).